We begin with the raw amino-acid sequence, 100 residues long: Small ribosomal subunit protein uS14c (100 aa).

Belongs to the universal ribosomal protein uS14 family. Part of the 30S ribosomal subunit.

It is found in the plastid. It localises to the chloroplast. Binds 16S rRNA, required for the assembly of 30S particles. The polypeptide is Small ribosomal subunit protein uS14c (Glycine max (Soybean)).